The primary structure comprises 828 residues: Glycerol-3-phosphate acyltransferase (828 aa).

The HXXXXD motif signature appears at cysteine 309–isoleucine 314.

It belongs to the GPAT/DAPAT family.

The protein localises to the cell inner membrane. The enzyme catalyses sn-glycerol 3-phosphate + an acyl-CoA = a 1-acyl-sn-glycero-3-phosphate + CoA. It participates in phospholipid metabolism; CDP-diacylglycerol biosynthesis; CDP-diacylglycerol from sn-glycerol 3-phosphate: step 1/3. This chain is Glycerol-3-phosphate acyltransferase, found in Pseudomonas entomophila (strain L48).